Here is a 299-residue protein sequence, read N- to C-terminus: Taste receptor type 2 member 5 (299 aa).

Residue Met1 is a topological domain, extracellular. A helical membrane pass occupies residues 2–22; it reads LSAGLGLLMLVAVIEFLIGLI. Residues 23–45 are Cytoplasmic-facing; sequence GNGILVVWSLREWIRKFSWSSYN. Residues 46-66 form a helical membrane-spanning segment; the sequence is LIILGLAGCRFLLQWLIILDL. Topologically, residues 67–82 are extracellular; that stretch reads SLFPLFQSSSWLRYLN. Residues 83-103 traverse the membrane as a helical segment; the sequence is VFWVLVSQASLWFATFLSVFY. At 104-127 the chain is on the cytoplasmic side; it reads CKKITTFDRPAYLWLKQRAYNLSL. Residues 128 to 148 traverse the membrane as a helical segment; sequence WCLLGYFIISLLLTVQVGLTV. The Extracellular portion of the chain corresponds to 149-175; that stretch reads HHPPQGNSSIRYPFEHWQYLYVFQLNS. The N-linked (GlcNAc...) asparagine glycan is linked to Asn155. A helical membrane pass occupies residues 176 to 196; the sequence is GSYLPLMVFLVSSGMLIISLY. At 197-223 the chain is on the cytoplasmic side; the sequence is THHKKMKVHSAGRRDARAKAHITALKS. The chain crosses the membrane as a helical span at residues 224 to 244; sequence LGCFLLLHLVYIVASPFSITS. Residues 245-253 are Extracellular-facing; it reads KTYPPDLTS. Residues 254–274 form a helical membrane-spanning segment; sequence VFIWETLMAAYPSLHSLMLIM. The Cytoplasmic portion of the chain corresponds to 275-299; it reads GIPRVKQTCQKILWKTVCARRCWGP.

This sequence belongs to the G-protein coupled receptor T2R family.

It is found in the membrane. Receptor that may play a role in the perception of bitterness and is gustducin-linked. May play a role in sensing the chemical composition of the gastrointestinal content. The activity of this receptor may stimulate alpha gustducin, mediate PLC-beta-2 activation and lead to the gating of TRPM5. This chain is Taste receptor type 2 member 5 (TAS2R5), found in Papio hamadryas (Hamadryas baboon).